The following is a 173-amino-acid chain: Ribosome maturation factor RimM (173 aa).

The 75-residue stretch at 95-169 (EGSYYFKDIL…RIEVTLLEGL (75 aa)) folds into the PRC barrel domain.

Belongs to the RimM family. In terms of assembly, binds ribosomal protein uS19.

It is found in the cytoplasm. In terms of biological role, an accessory protein needed during the final step in the assembly of 30S ribosomal subunit, possibly for assembly of the head region. Essential for efficient processing of 16S rRNA. May be needed both before and after RbfA during the maturation of 16S rRNA. It has affinity for free ribosomal 30S subunits but not for 70S ribosomes. The sequence is that of Ribosome maturation factor RimM from Lactobacillus johnsonii (strain CNCM I-12250 / La1 / NCC 533).